The chain runs to 257 residues: MTPSEFRQSVRRGAFRGPTAGHCGPFAQANLAILPDAYAHDFLRFCQANPKACPLLGVGEPGAFRIDALGDDLDIRTDVPSYNVYRDGRLTERVESLDALWRDDFVVFAIGCSFSFEDMLAREGIGLRHVEEGCNVPMYRTSIANRRAGIFGGQLVVSMRPLRGADAIRAVQITSRFPGVHGAPIHIGDPRALGIEDLNAPEFGDAVTIRDGELPVFWACGVTPQTALMDAKLPIAIAHTPGHMLMTDITNASLAVF.

This sequence belongs to the D-glutamate cyclase family.

This chain is Putative hydro-lyase Bcen2424_3550, found in Burkholderia cenocepacia (strain HI2424).